A 447-amino-acid polypeptide reads, in one-letter code: SNF1-related protein kinase regulatory subunit gamma-1-like (447 aa).

An N-acetylalanine modification is found at A2. The residue at position 35 (S35) is a Phosphoserine. CBS domains are found at residues 54–120 (QVPG…SAEL), 214–275 (SFRW…GRDW), 292–350 (MSPN…PEVF), and 374–433 (LAIP…PNYF).

This sequence belongs to the 5'-AMP-activated protein kinase gamma subunit family. As to quaternary structure, subunit of a probable heterotrimeric complex consisting of an alpha catalytic (KIN10 or KIN11) subunit, and a beta (KINB) and a gamma (KING or SNF4) non-catalytic regulatory subunits.

Regulatory subunit of the probable trimeric SNF1-related protein kinase (SnRK) complex, which may play a role in a signal transduction cascade regulating gene expression and carbohydrate metabolism in higher plants. The chain is SNF1-related protein kinase regulatory subunit gamma-1-like (CBSCBS2) from Arabidopsis thaliana (Mouse-ear cress).